The sequence spans 380 residues: UDP-3-O-acylglucosamine N-acyltransferase (380 aa).

His-263 acts as the Proton acceptor in catalysis.

It belongs to the transferase hexapeptide repeat family. LpxD subfamily. Homotrimer.

It carries out the reaction a UDP-3-O-[(3R)-3-hydroxyacyl]-alpha-D-glucosamine + a (3R)-hydroxyacyl-[ACP] = a UDP-2-N,3-O-bis[(3R)-3-hydroxyacyl]-alpha-D-glucosamine + holo-[ACP] + H(+). Its pathway is bacterial outer membrane biogenesis; LPS lipid A biosynthesis. Its function is as follows. Catalyzes the N-acylation of UDP-3-O-acylglucosamine using 3-hydroxyacyl-ACP as the acyl donor. Is involved in the biosynthesis of lipid A, a phosphorylated glycolipid that anchors the lipopolysaccharide to the outer membrane of the cell. This chain is UDP-3-O-acylglucosamine N-acyltransferase, found in Rhodopirellula baltica (strain DSM 10527 / NCIMB 13988 / SH1).